The sequence spans 320 residues: NAC domain-containing protein 20 (320 aa).

In terms of domain architecture, NAC spans 14-170 (LPPGFRFHPT…DWAVCRIFHK (157 aa)). A DNA-binding region spans residues 114 to 176 (IGMKKTLVFY…IFHKSSGIKK (63 aa)).

Forms homodimers. Forms heterodimers with NAC26. Expressed in developing seeds.

It localises to the nucleus. The protein localises to the endoplasmic reticulum. Transcription factor that acts redundantly with NAC26 to regulate the expression of genes involved in the biosynthesis of starch and storage proteins in grain. Directly binds to the promoters of starch synthase 1 (SS1), pullulanase (PUL), glutelin A1 (GLUA1), glutelins B4 and B5 (GLUB4 and GLUB5), alpha-globulin and 16 kDa prolamin, and activates their expression. Possesses transactivation activity in yeast. In Oryza sativa subsp. indica (Rice), this protein is NAC domain-containing protein 20.